A 305-amino-acid polypeptide reads, in one-letter code: Tetraspanin-12 (305 aa).

Residues 1 to 12 (MAREDSVKCLRC) are Cytoplasmic-facing. 2 S-palmitoyl cysteine lipidation sites follow: cysteine 9 and cysteine 12. A helical membrane pass occupies residues 13-33 (LLYALNLLFWLMSISVLAVSA). At 34–59 (WMRDYLNNVLTLTAETRVEEAVILTY) the chain is on the extracellular side. A helical transmembrane segment spans residues 60 to 80 (FPVVHPVMIAVCCFLIIVGML). Residues 81-89 (GYCGTVKRN) lie on the Cytoplasmic side of the membrane. The S-palmitoyl cysteine moiety is linked to residue cysteine 83. The chain crosses the membrane as a helical span at residues 90–110 (LLLLAWYFGSLLVIFCVELAC). Topologically, residues 111-224 (GVWTYEQEIM…RGTKQLQVLR (114 aa)) are extracellular. A helical transmembrane segment spans residues 225–245 (FLGISIGVTQILAMILTITLL). Residues 246–305 (WALYYDRREPGTDQMMALKNDTTQHLPCHSVELLKPSLSRIFEHTSMANSFNTHFEMEEL) are Cytoplasmic-facing.

Belongs to the tetraspanin (TM4SF) family. In terms of assembly, component of a complex, at least composed of TSPAN12, FZD4 and norrin (NDP). Interacts (when palmitoylated) with ADAM10. Interacts with MMP14/MT1-MMP. Palmitoylated; required for interaction with ADAM10. The precise position of palmitoylated residues is unclear and occurs either on Cys-9, Cys-12 and/or Cys-83.

The protein localises to the cell membrane. Functionally, regulator of cell surface receptor signal transduction. Plays a central role in retinal vascularization by regulating norrin (NDP) signal transduction. Acts in concert with norrin (NDP) to promote FZD4 multimerization and subsequent activation of FZD4, leading to promote accumulation of beta-catenin (CTNNB1) and stimulate LEF/TCF-mediated transcriptional programs. Suprisingly, it only activates the norrin (NDP)-dependent activation of FZD4, while it does not activate the Wnt-dependent activation of FZD4, suggesting the existence of a Wnt-independent signaling that also promote accumulation the beta-catenin (CTNNB1). Acts as a regulator of membrane proteinases such as ADAM10 and MMP14/MT1-MMP. Activates ADAM10-dependent cleavage activity of amyloid precursor protein (APP). Activates MMP14/MT1-MMP-dependent cleavage activity. This is Tetraspanin-12 (TSPAN12) from Bos taurus (Bovine).